We begin with the raw amino-acid sequence, 210 residues long: ATP-dependent dethiobiotin synthetase BioD (210 aa).

Position 13–18 (Gly13–Val18) interacts with ATP. Thr17 is a Mg(2+) binding site. Lys33 is a catalytic residue. Glu101 is a binding site for Mg(2+). Residues Glu101–Gly104 and Pro185–Leu187 each bind ATP.

It belongs to the dethiobiotin synthetase family. Homodimer. The cofactor is Mg(2+).

It localises to the cytoplasm. It catalyses the reaction (7R,8S)-7,8-diammoniononanoate + CO2 + ATP = (4R,5S)-dethiobiotin + ADP + phosphate + 3 H(+). It participates in cofactor biosynthesis; biotin biosynthesis; biotin from 7,8-diaminononanoate: step 1/2. Its function is as follows. Catalyzes a mechanistically unusual reaction, the ATP-dependent insertion of CO2 between the N7 and N8 nitrogen atoms of 7,8-diaminopelargonic acid (DAPA, also called 7,8-diammoniononanoate) to form a ureido ring. The sequence is that of ATP-dependent dethiobiotin synthetase BioD from Bradyrhizobium sp. (strain BTAi1 / ATCC BAA-1182).